Here is a 225-residue protein sequence, read N- to C-terminus: Probable polyketide biosynthesis zinc-dependent hydrolase BaeB (225 aa).

Zn(2+) is bound by residues histidine 62, histidine 64, aspartate 66, histidine 67, histidine 123, aspartate 140, and histidine 181.

Belongs to the metallo-beta-lactamase superfamily. The cofactor is Zn(2+).

The protein localises to the cytoplasm. The protein operates within antibiotic biosynthesis; bacillaene biosynthesis. Probably involved in some intermediate steps for the synthesis of the antibiotic polyketide bacillaene which is involved in secondary metabolism. The polypeptide is Probable polyketide biosynthesis zinc-dependent hydrolase BaeB (baeB) (Bacillus velezensis (strain DSM 23117 / BGSC 10A6 / LMG 26770 / FZB42) (Bacillus amyloliquefaciens subsp. plantarum)).